Consider the following 147-residue polypeptide: Hemoglobin subunit beta-Y (147 aa).

One can recognise a Globin domain in the interval 3 to 147; sequence HFTAEEKAAI…VANALSLKYH (145 aa). Residues H64 and H93 each coordinate heme b.

Belongs to the globin family. Heterotetramer of two alpha chains and two beta chains.

Its function is as follows. This is a minor early embryonic beta chain. The protein is Hemoglobin subunit beta-Y (HBBY) of Mesocricetus auratus (Golden hamster).